The chain runs to 192 residues: Glycerol-3-phosphate acyltransferase (192 aa).

Helical transmembrane passes span 3 to 23 (ALFLVIFAYLLGSITFGEVIA), 51 to 71 (YGVLVFFLDFLKGFIPALIAV), 80 to 100 (VLTFTGLASVLGHMYPVFFGF), 112 to 132 (VVFAVSPSVALFSFLVWLGIF), and 149 to 169 (AFLFLFVAGYPVNVLFMAIVI).

The protein belongs to the PlsY family. As to quaternary structure, probably interacts with PlsX.

Its subcellular location is the cell inner membrane. The enzyme catalyses an acyl phosphate + sn-glycerol 3-phosphate = a 1-acyl-sn-glycero-3-phosphate + phosphate. The protein operates within lipid metabolism; phospholipid metabolism. Catalyzes the transfer of an acyl group from acyl-phosphate (acyl-PO(4)) to glycerol-3-phosphate (G3P) to form lysophosphatidic acid (LPA). This enzyme utilizes acyl-phosphate as fatty acyl donor, but not acyl-CoA or acyl-ACP. This is Glycerol-3-phosphate acyltransferase from Aquifex aeolicus (strain VF5).